Here is a 363-residue protein sequence, read N- to C-terminus: Protein arginine N-methyltransferase 2 (363 aa).

ANK repeat units follow at residues 22–46 and 48–80; these read AAQT…FQDD and LGWS…AVDK. An RMT2 domain is found at 111–363; the sequence is KTSAGDNLVF…RLPIAKMSLI (253 aa). S-adenosyl-L-methionine contacts are provided by residues Phe120, 186 to 191, 209 to 211, 236 to 237, and Asp265; these read FGLGIV, EAH, and WQ.

It belongs to the class I-like SAM-binding methyltransferase superfamily. RMT2 methyltransferase family. In terms of assembly, monomer.

It localises to the cytoplasm. It is found in the nucleus. In terms of biological role, S-adenosyl-L-methionine-dependent protein-arginine N-methyltransferase that methylates the delta-nitrogen atom of arginine residues to form N5-methylarginine (type IV) in target proteins. Monomethylates ribosomal protein L12. The chain is Protein arginine N-methyltransferase 2 from Cryptococcus neoformans var. neoformans serotype D (strain B-3501A) (Filobasidiella neoformans).